A 75-amino-acid polypeptide reads, in one-letter code: Supwaprin-a (75 aa).

An N-terminal signal peptide occupies residues 1 to 24; it reads MSSGGLLLLLGFLTLWAELTPVSG. The WAP domain occupies 27-72; the sequence is RPKKPGLCPPRPQKPPCVRECKNDWSCPGEQKCCRYGCIFECRDPI. 4 disulfides stabilise this stretch: C34–C60, C43–C64, C47–C59, and C53–C68.

It belongs to the venom waprin family. Expressed by the venom gland.

The protein localises to the secreted. Its function is as follows. Damages membranes of susceptible bacteria. Has no hemolytic activity. Not toxic to mice. Does not inhibit the proteinases elastase and cathepsin G. The sequence is that of Supwaprin-a from Austrelaps superbus (Lowland copperhead snake).